The sequence spans 254 residues: Phosphoglycerate mutase 1 (254 aa).

Substrate contacts are provided by residues 10–17 (RHGESAWN) and 23–24 (SG). The Tele-phosphohistidine intermediate role is filled by histidine 11. 2 positions are modified to phosphoserine: serine 14 and serine 23. Tyrosine 26 is subject to Phosphotyrosine. At serine 31 the chain carries Phosphoserine. Residues arginine 62, 89 to 92 (ERHY), and lysine 100 each bind substrate. Glutamate 89 functions as the Proton donor/acceptor in the catalytic mechanism. Lysine 106 carries the N6-acetyllysine modification. Residue 116 to 117 (RR) coordinates substrate. Serine 118 is modified (phosphoserine). 187–188 (GN) is a substrate binding site. Lysine 251 carries the N6-acetyllysine; alternate modification. Lysine 251 is modified (N6-succinyllysine; alternate). N6-acetyllysine occurs at positions 253 and 254.

This sequence belongs to the phosphoglycerate mutase family. BPG-dependent PGAM subfamily. Homodimer. Post-translationally, acetylated at Lys-253, Lys-253 and Lys-254 under high glucose condition. Acetylation increases catalytic activity. Under glucose restriction SIRT1 levels dramatically increase and it deacetylates the enzyme.

The enzyme catalyses (2R)-2-phosphoglycerate = (2R)-3-phosphoglycerate. It carries out the reaction (2R)-3-phospho-glyceroyl phosphate = (2R)-2,3-bisphosphoglycerate + H(+). Functionally, catalyzes the interconversion of 2-phosphoglycerate and 3-phosphoglyceratea crucial step in glycolysis, by using 2,3-bisphosphoglycerate. Also catalyzes the interconversion of (2R)-2,3-bisphosphoglycerate and (2R)-3-phospho-glyceroyl phosphate. The protein is Phosphoglycerate mutase 1 of Pongo abelii (Sumatran orangutan).